The primary structure comprises 91 residues: UPF0358 protein SAB0977 (91 aa).

This sequence belongs to the UPF0358 family.

The chain is UPF0358 protein SAB0977 from Staphylococcus aureus (strain bovine RF122 / ET3-1).